Consider the following 178-residue polypeptide: Large ribosomal subunit protein uL6 (178 aa).

This sequence belongs to the universal ribosomal protein uL6 family. Part of the 50S ribosomal subunit.

This protein binds to the 23S rRNA, and is important in its secondary structure. It is located near the subunit interface in the base of the L7/L12 stalk, and near the tRNA binding site of the peptidyltransferase center. This chain is Large ribosomal subunit protein uL6, found in Desulfatibacillum aliphaticivorans.